The sequence spans 122 residues: Glycine cleavage system H protein (122 aa).

A Lipoyl-binding domain is found at T19–K101. K60 is modified (N6-lipoyllysine).

This sequence belongs to the GcvH family. In terms of assembly, the glycine cleavage system is composed of four proteins: P, T, L and H. (R)-lipoate serves as cofactor.

Its function is as follows. The glycine cleavage system catalyzes the degradation of glycine. The H protein shuttles the methylamine group of glycine from the P protein to the T protein. In Dinoroseobacter shibae (strain DSM 16493 / NCIMB 14021 / DFL 12), this protein is Glycine cleavage system H protein.